The chain runs to 329 residues: Acetyl-coenzyme A carboxylase carboxyl transferase subunit alpha (329 aa).

A CoA carboxyltransferase C-terminal domain is found at 40-294 (QLESLAARRR…RAAIERHLEQ (255 aa)).

It belongs to the AccA family. As to quaternary structure, acetyl-CoA carboxylase is a heterohexamer composed of biotin carboxyl carrier protein (AccB), biotin carboxylase (AccC) and two subunits each of ACCase subunit alpha (AccA) and ACCase subunit beta (AccD).

The protein resides in the cytoplasm. The enzyme catalyses N(6)-carboxybiotinyl-L-lysyl-[protein] + acetyl-CoA = N(6)-biotinyl-L-lysyl-[protein] + malonyl-CoA. The protein operates within lipid metabolism; malonyl-CoA biosynthesis; malonyl-CoA from acetyl-CoA: step 1/1. Component of the acetyl coenzyme A carboxylase (ACC) complex. First, biotin carboxylase catalyzes the carboxylation of biotin on its carrier protein (BCCP) and then the CO(2) group is transferred by the carboxyltransferase to acetyl-CoA to form malonyl-CoA. This chain is Acetyl-coenzyme A carboxylase carboxyl transferase subunit alpha, found in Synechococcus sp. (strain CC9605).